Consider the following 198-residue polypeptide: SCO2-like protein RF_0043 (198 aa).

Belongs to the SCO1/2 family.

The protein is SCO2-like protein RF_0043 of Rickettsia felis (strain ATCC VR-1525 / URRWXCal2) (Rickettsia azadi).